Here is a 735-residue protein sequence, read N- to C-terminus: Muskelin (735 aa).

Position 2 is an N-acetylalanine (Ala-2). The 33-residue stretch at 172 to 204 (REQEAIRLCLKHFRQHNYTEAFESLQKKTKIAL) folds into the LisH domain. Residues 206–258 (HPMLTDIHDKLVLKGDFDACEELIEKAVNDGLFNQYISQQEYKPRWSQIIPKS) enclose the CTLH domain. Kelch repeat units lie at residues 284–330 (TVYL…SCHK), 339–391 (QIYT…FDHQ), 408–458 (ILTC…SRIG), 469–515 (CLYV…TGFT), 526–578 (EIHV…SLQE), and 597–651 (VHYL…AQMD).

As to quaternary structure, homodimer; may form higher oligomers. Identified in the CTLH complex that contains GID4, RANBP9 and/or RANBP10, MKLN1, MAEA, RMND5A (or alternatively its paralog RMND5B), GID8, ARMC8, WDR26 and YPEL5. Within this complex, MAEA, RMND5A (or alternatively its paralog RMND5B), GID8, WDR26, and RANBP9 and/or RANBP10 form the catalytic core, while GID4, MKLN1, ARMC8 and YPEL5 have ancillary roles. Interacts with RANBP9. Part of a complex consisting of RANBP9, MKLN1 and GID8. Interacts with GABRA1. Interacts with the C-terminal tail of PTGER3.

Its subcellular location is the cytoplasm. It is found in the cytosol. The protein resides in the nucleus. The protein localises to the nucleoplasm. It localises to the cell projection. Its subcellular location is the ruffle. It is found in the cell cortex. The protein resides in the synapse. The protein localises to the postsynapse. Its function is as follows. Component of the CTLH E3 ubiquitin-protein ligase complex that selectively accepts ubiquitin from UBE2H and mediates ubiquitination and subsequent proteasomal degradation of the transcription factor HBP1. Required for internalization of the GABA receptor GABRA1 from the cell membrane via endosomes and subsequent GABRA1 degradation. Acts as a mediator of cell spreading and cytoskeletal responses to the extracellular matrix component THBS1. This Pongo abelii (Sumatran orangutan) protein is Muskelin (MKLN1).